We begin with the raw amino-acid sequence, 224 residues long: Ribonuclease 3 (224 aa).

The RNase III domain maps to 4 to 126; the sequence is LDRLQHKIGY…IIGAMSLDSN (123 aa). Residue E39 participates in Mg(2+) binding. D43 is an active-site residue. The Mg(2+) site is built by D112 and E115. E115 is a catalytic residue. A DRBM domain is found at 153 to 223; that stretch reads DPKTRLQEYL…AEQILKVLDI (71 aa).

This sequence belongs to the ribonuclease III family. Homodimer. Requires Mg(2+) as cofactor.

Its subcellular location is the cytoplasm. It carries out the reaction Endonucleolytic cleavage to 5'-phosphomonoester.. In terms of biological role, digests double-stranded RNA. Involved in the processing of primary rRNA transcript to yield the immediate precursors to the large and small rRNAs (23S and 16S). Processes some mRNAs, and tRNAs when they are encoded in the rRNA operon. Processes pre-crRNA and tracrRNA of type II CRISPR loci if present in the organism. The sequence is that of Ribonuclease 3 from Actinobacillus succinogenes (strain ATCC 55618 / DSM 22257 / CCUG 43843 / 130Z).